A 338-amino-acid polypeptide reads, in one-letter code: MNLQRFPRYPLTFGPTPIQPLKRLSAHLGGKVELYAKREDCNSGLAFGGNKTRKLEYLVPDALAQGADTLVSIGGVQSNQTRQVAAVAAHLGMKCVLVQEHWVNYEDPVYDRVGNIQLSRMMGADVRLVSDGFDIGIRRSWEEAMESVRQAGGKPYPIPAGCSEHPLGGLGFVGFAEEVRAQEAQLGFKFDYVVVCSVTGSTQAGMVVGFAADGRADRVIGIDASAKPEQTREQITRIARHTAELVELGRDIVEQDVVLDTRYGGPEYGLPSDGTLEAIRLCARLEGMLTDPVYEGKSMHGMIDKVRLGEFEPGSKVLYAHLGGAPALSAYNGIFRNG.

Residue Lys-51 is modified to N6-(pyridoxal phosphate)lysine. Catalysis depends on Ser-78, which acts as the Nucleophile.

This sequence belongs to the ACC deaminase/D-cysteine desulfhydrase family. Homotrimer. Pyridoxal 5'-phosphate serves as cofactor.

It carries out the reaction 1-aminocyclopropane-1-carboxylate + H2O = 2-oxobutanoate + NH4(+). Its function is as follows. Catalyzes a cyclopropane ring-opening reaction, the irreversible conversion of 1-aminocyclopropane-1-carboxylate (ACC) to ammonia and alpha-ketobutyrate. Allows growth on ACC as a nitrogen source. The sequence is that of 1-aminocyclopropane-1-carboxylate deaminase from Burkholderia orbicola (strain MC0-3).